The chain runs to 282 residues: Large ribosomal subunit protein uL2 (282 aa).

Residues 215–282 (RHKGIRPTVR…IIRSRKETKK (68 aa)) are disordered. Basic residues predominate over residues 263–282 (RNPKKPSTKLIIRSRKETKK).

The protein belongs to the universal ribosomal protein uL2 family. Part of the 50S ribosomal subunit. Forms a bridge to the 30S subunit in the 70S ribosome.

Its function is as follows. One of the primary rRNA binding proteins. Required for association of the 30S and 50S subunits to form the 70S ribosome, for tRNA binding and peptide bond formation. It has been suggested to have peptidyltransferase activity; this is somewhat controversial. Makes several contacts with the 16S rRNA in the 70S ribosome. The chain is Large ribosomal subunit protein uL2 from Mesomycoplasma hyopneumoniae (strain 7448) (Mycoplasma hyopneumoniae).